We begin with the raw amino-acid sequence, 146 residues long: Acidic phospholipase A2 S8-51 (146 aa).

Residues 1–19 (MYPAHLLVLLAVCVSLLGA) form the signal peptide. Positions 20 to 27 (ASIPPQPL) are excised as a propeptide. 7 cysteine pairs are disulfide-bonded: Cys-38–Cys-98, Cys-54–Cys-145, Cys-56–Cys-72, Cys-71–Cys-126, Cys-78–Cys-119, Cys-87–Cys-112, and Cys-105–Cys-117. Ca(2+) is bound by residues Tyr-55, Gly-57, and Gly-59. His-75 is a catalytic residue. Asp-76 lines the Ca(2+) pocket. Residue Asp-120 is part of the active site.

This sequence belongs to the phospholipase A2 family. Group I subfamily. D49 sub-subfamily. Ca(2+) is required as a cofactor. In terms of tissue distribution, expressed by the venom gland.

It is found in the secreted. It carries out the reaction a 1,2-diacyl-sn-glycero-3-phosphocholine + H2O = a 1-acyl-sn-glycero-3-phosphocholine + a fatty acid + H(+). In terms of biological role, snake venom phospholipase A2 (PLA2) that inhibits collagen-induced platelet aggregation. PLA2 catalyzes the calcium-dependent hydrolysis of the 2-acyl groups in 3-sn-phosphoglycerides. The sequence is that of Acidic phospholipase A2 S8-51 from Austrelaps superbus (Lowland copperhead snake).